Here is a 467-residue protein sequence, read N- to C-terminus: Asparagine--tRNA ligase (467 aa).

Belongs to the class-II aminoacyl-tRNA synthetase family. As to quaternary structure, homodimer.

It is found in the cytoplasm. It carries out the reaction tRNA(Asn) + L-asparagine + ATP = L-asparaginyl-tRNA(Asn) + AMP + diphosphate + H(+). The sequence is that of Asparagine--tRNA ligase from Haemophilus influenzae (strain PittGG).